The primary structure comprises 244 residues: 27 kDa core protein (244 aa).

It belongs to the chordopoxvirinae D3 family.

The protein localises to the virion. In terms of biological role, late protein which is part of a large complex required for early virion morphogenesis. This complex participates in the formation of virosomes and the incorporation of virosomal contents into nascent immature virions. The chain is 27 kDa core protein from Swinepox virus (strain Swine/Nebraska/17077-99/1999) (SWPV).